The following is a 453-amino-acid chain: Bifunctional protein GlmU (453 aa).

The tract at residues 1–231 is pyrophosphorylase; sequence MERTCLAVIL…EIEMTGCNNR (231 aa). UDP-N-acetyl-alpha-D-glucosamine is bound by residues 10 to 13, Lys24, Gln77, 82 to 83, 105 to 107, Gly143, Glu157, Asn172, and Asn229; these read LAAG, GT, and YGD. Mg(2+) is bound at residue Asp107. Asn229 serves as a coordination point for Mg(2+). Residues 232–252 form a linker region; it reads AELAVIERFWQERRRREMMLA. The N-acetyltransferase stretch occupies residues 253-453; it reads GVTMIAPETV…AIKAAKKAEA (201 aa). Residues Arg318 and Lys336 each contribute to the UDP-N-acetyl-alpha-D-glucosamine site. His348 (proton acceptor) is an active-site residue. The UDP-N-acetyl-alpha-D-glucosamine site is built by Tyr351 and Asn362. Acetyl-CoA is bound by residues Ala365, 371 to 372, Ser390, Ser408, and Arg425; that span reads NY.

In the N-terminal section; belongs to the N-acetylglucosamine-1-phosphate uridyltransferase family. The protein in the C-terminal section; belongs to the transferase hexapeptide repeat family. Homotrimer. The cofactor is Mg(2+).

It is found in the cytoplasm. It catalyses the reaction alpha-D-glucosamine 1-phosphate + acetyl-CoA = N-acetyl-alpha-D-glucosamine 1-phosphate + CoA + H(+). The enzyme catalyses N-acetyl-alpha-D-glucosamine 1-phosphate + UTP + H(+) = UDP-N-acetyl-alpha-D-glucosamine + diphosphate. It participates in nucleotide-sugar biosynthesis; UDP-N-acetyl-alpha-D-glucosamine biosynthesis; N-acetyl-alpha-D-glucosamine 1-phosphate from alpha-D-glucosamine 6-phosphate (route II): step 2/2. The protein operates within nucleotide-sugar biosynthesis; UDP-N-acetyl-alpha-D-glucosamine biosynthesis; UDP-N-acetyl-alpha-D-glucosamine from N-acetyl-alpha-D-glucosamine 1-phosphate: step 1/1. It functions in the pathway bacterial outer membrane biogenesis; LPS lipid A biosynthesis. Catalyzes the last two sequential reactions in the de novo biosynthetic pathway for UDP-N-acetylglucosamine (UDP-GlcNAc). The C-terminal domain catalyzes the transfer of acetyl group from acetyl coenzyme A to glucosamine-1-phosphate (GlcN-1-P) to produce N-acetylglucosamine-1-phosphate (GlcNAc-1-P), which is converted into UDP-GlcNAc by the transfer of uridine 5-monophosphate (from uridine 5-triphosphate), a reaction catalyzed by the N-terminal domain. The polypeptide is Bifunctional protein GlmU (Rhizobium etli (strain ATCC 51251 / DSM 11541 / JCM 21823 / NBRC 15573 / CFN 42)).